The chain runs to 355 residues: Chorismate synthase (355 aa).

Residue Arg48 coordinates NADP(+). Residues 126–128, Gly278, 293–297, and Arg319 each bind FMN; these read RSS and KPIPS.

It belongs to the chorismate synthase family. Homotetramer. FMNH2 serves as cofactor.

The catalysed reaction is 5-O-(1-carboxyvinyl)-3-phosphoshikimate = chorismate + phosphate. It participates in metabolic intermediate biosynthesis; chorismate biosynthesis; chorismate from D-erythrose 4-phosphate and phosphoenolpyruvate: step 7/7. Functionally, catalyzes the anti-1,4-elimination of the C-3 phosphate and the C-6 proR hydrogen from 5-enolpyruvylshikimate-3-phosphate (EPSP) to yield chorismate, which is the branch point compound that serves as the starting substrate for the three terminal pathways of aromatic amino acid biosynthesis. This reaction introduces a second double bond into the aromatic ring system. The polypeptide is Chorismate synthase (Oleidesulfovibrio alaskensis (strain ATCC BAA-1058 / DSM 17464 / G20) (Desulfovibrio alaskensis)).